Here is a 250-residue protein sequence, read N- to C-terminus: UDP-2,3-diacylglucosamine hydrolase (250 aa).

Mn(2+) contacts are provided by D7, H9, D40, N78, and H113. Position 78–79 (78–79) interacts with substrate; sequence NR. Residues D121, S159, T163, K166, and H194 each coordinate substrate. Mn(2+)-binding residues include H194 and H196.

It belongs to the LpxH family. It depends on Mn(2+) as a cofactor.

It localises to the cell inner membrane. The enzyme catalyses UDP-2-N,3-O-bis[(3R)-3-hydroxytetradecanoyl]-alpha-D-glucosamine + H2O = 2-N,3-O-bis[(3R)-3-hydroxytetradecanoyl]-alpha-D-glucosaminyl 1-phosphate + UMP + 2 H(+). The protein operates within glycolipid biosynthesis; lipid IV(A) biosynthesis; lipid IV(A) from (3R)-3-hydroxytetradecanoyl-[acyl-carrier-protein] and UDP-N-acetyl-alpha-D-glucosamine: step 4/6. In terms of biological role, hydrolyzes the pyrophosphate bond of UDP-2,3-diacylglucosamine to yield 2,3-diacylglucosamine 1-phosphate (lipid X) and UMP by catalyzing the attack of water at the alpha-P atom. Involved in the biosynthesis of lipid A, a phosphorylated glycolipid that anchors the lipopolysaccharide to the outer membrane of the cell. This is UDP-2,3-diacylglucosamine hydrolase from Pseudomonas fluorescens (strain ATCC BAA-477 / NRRL B-23932 / Pf-5).